The sequence spans 373 residues: P2Y purinoceptor 1 (373 aa).

At M1–F51 the chain is on the extracellular side. N-linked (GlcNAc...) asparagine glycosylation is found at N11 and N27. 2 disulfide bridges follow: C42–C296 and C124–C202. K46 contacts ADP. Residues Y52 to W74 form a helical membrane-spanning segment. Over M75–S87 the chain is Cytoplasmic. Residues V88–F109 traverse the membrane as a helical segment. Residues Y110–K125 lie on the Extracellular side of the membrane. An N-linked (GlcNAc...) asparagine glycan is attached at N113. The helical transmembrane segment at L126–A147 threads the bilayer. Topologically, residues H148–K166 are cytoplasmic. A helical membrane pass occupies residues N167–F188. Residues Y189–Y214 lie on the Extracellular side of the membrane. N197 is a glycosylation site (N-linked (GlcNAc...) asparagine). Y203–T205 provides a ligand contact to ADP. A helical membrane pass occupies residues F215–Y237. At G238–Y260 the chain is on the cytoplasmic side. Residues L261–L284 traverse the membrane as a helical segment. ADP-binding positions include N283 to R287, Y303 to Y306, and R310. Over R285–Y303 the chain is Extracellular. A helical transmembrane segment spans residues A304 to F325. Residues L326–L373 lie on the Cytoplasmic side of the membrane.

This sequence belongs to the G-protein coupled receptor 1 family.

It is found in the cell membrane. Its function is as follows. Receptor for extracellular adenine nucleotides such as ADP. In platelets, binding to ADP leads to mobilization of intracellular calcium ions via activation of phospholipase C, a change in platelet shape, and ultimately platelet aggregation. The protein is P2Y purinoceptor 1 (P2ry1) of Mus musculus (Mouse).